Consider the following 397-residue polypeptide: Acetate kinase (397 aa).

Asn-8 contributes to the Mg(2+) binding site. Lys-15 contacts ATP. Arg-89 contributes to the substrate binding site. The active-site Proton donor/acceptor is the Asp-146. Residues 206–210, 280–282, and 328–332 each bind ATP; these read HLGNG, DMR, and GVGEN. Glu-382 is a Mg(2+) binding site.

Belongs to the acetokinase family. In terms of assembly, homodimer. Requires Mg(2+) as cofactor. Mn(2+) serves as cofactor.

The protein localises to the cytoplasm. It carries out the reaction acetate + ATP = acetyl phosphate + ADP. It participates in metabolic intermediate biosynthesis; acetyl-CoA biosynthesis; acetyl-CoA from acetate: step 1/2. Catalyzes the formation of acetyl phosphate from acetate and ATP. Can also catalyze the reverse reaction. The protein is Acetate kinase of Leifsonia xyli subsp. xyli (strain CTCB07).